Here is a 225-residue protein sequence, read N- to C-terminus: 7-cyano-7-deazaguanine synthase (225 aa).

10–20 serves as a coordination point for ATP; that stretch reads VSGGLDSTTAL. Residues Cys-189, Cys-199, Cys-202, and Cys-205 each coordinate Zn(2+).

Belongs to the QueC family. Zn(2+) serves as cofactor.

The enzyme catalyses 7-carboxy-7-deazaguanine + NH4(+) + ATP = 7-cyano-7-deazaguanine + ADP + phosphate + H2O + H(+). It functions in the pathway purine metabolism; 7-cyano-7-deazaguanine biosynthesis. Its function is as follows. Catalyzes the ATP-dependent conversion of 7-carboxy-7-deazaguanine (CDG) to 7-cyano-7-deazaguanine (preQ(0)). This Saccharophagus degradans (strain 2-40 / ATCC 43961 / DSM 17024) protein is 7-cyano-7-deazaguanine synthase.